A 309-amino-acid polypeptide reads, in one-letter code: MILTVTMNPSIDISYPLDELKIDTVNRVVDVTKTAGGKGLNVTRVLSEFGDSVLATGLVGGNLGEFLVEHIDNQVKKDFFSIQGETRNCIAILHGDNQTEVLEKGPEVLEQEGQDFLEHFKKLLESVEVVAISGSLPAGLPVDYYASLVELANQAGKPVVLDCSGAALQAVLESPHKPTVIKPNNEELSQLLGREVSEDLDELKEVLQEPLFAGIEWIIVSLGANGTFAKHGDTFYKVDIPRIQVVNPVGSGDSTVAGISSGLLHKESDAELLIKANVLGMLNAQEKMTGHVNMANYQVLYDQLIVKEV.

The protein belongs to the carbohydrate kinase PfkB family. LacC subfamily.

It catalyses the reaction D-tagatofuranose 6-phosphate + ATP = D-tagatofuranose 1,6-bisphosphate + ADP + H(+). It participates in carbohydrate metabolism; D-tagatose 6-phosphate degradation; D-glyceraldehyde 3-phosphate and glycerone phosphate from D-tagatose 6-phosphate: step 1/2. The chain is Tagatose-6-phosphate kinase from Streptococcus pneumoniae (strain Taiwan19F-14).